The primary structure comprises 45 residues: Large ribosomal subunit protein bL34 (45 aa).

The segment at 1-45 (MTKRTFGGTSRKRKRVSGFRVRMRSHTGRRVIKSRRKRGRDRIAV) is disordered. Basic residues predominate over residues 10 to 45 (SRKRKRVSGFRVRMRSHTGRRVIKSRRKRGRDRIAV).

Belongs to the bacterial ribosomal protein bL34 family.

This chain is Large ribosomal subunit protein bL34, found in Prochlorococcus marinus (strain MIT 9515).